Here is a 428-residue protein sequence, read N- to C-terminus: UPF0597 protein BF3772 (428 aa).

It belongs to the UPF0597 family.

In Bacteroides fragilis (strain YCH46), this protein is UPF0597 protein BF3772.